The chain runs to 363 residues: Small ribosomal subunit biogenesis GTPase RsgA (363 aa).

Residues 112-268 (HQQVIAANID…LIDTPGMREL (157 aa)) form the CP-type G domain. Residues 157-160 (TKAD) and 210-218 (GSSGAGKST) each bind GTP. Positions 291, 296, 298, and 304 each coordinate Zn(2+). The tract at residues 340-363 (RVAQNNRGKGSGKRPASVDRPGRR) is disordered.

Belongs to the TRAFAC class YlqF/YawG GTPase family. RsgA subfamily. In terms of assembly, monomer. Associates with 30S ribosomal subunit, binds 16S rRNA. It depends on Zn(2+) as a cofactor.

The protein localises to the cytoplasm. One of several proteins that assist in the late maturation steps of the functional core of the 30S ribosomal subunit. Helps release RbfA from mature subunits. May play a role in the assembly of ribosomal proteins into the subunit. Circularly permuted GTPase that catalyzes slow GTP hydrolysis, GTPase activity is stimulated by the 30S ribosomal subunit. In Xanthomonas campestris pv. campestris (strain 8004), this protein is Small ribosomal subunit biogenesis GTPase RsgA.